Here is a 217-residue protein sequence, read N- to C-terminus: Probable GTP-binding protein EngB (217 aa).

One can recognise an EngB-type G domain in the interval 27 to 201 (GGVEIAFAGR…AQTLSGWYLA (175 aa)). GTP is bound by residues 35–42 (GRSNAGKS), 62–66 (GRTQL), 80–83 (DLPG), 147–150 (TKAD), and 180–182 (FSS). 2 residues coordinate Mg(2+): Ser-42 and Thr-64.

It belongs to the TRAFAC class TrmE-Era-EngA-EngB-Septin-like GTPase superfamily. EngB GTPase family. Mg(2+) serves as cofactor.

Its function is as follows. Necessary for normal cell division and for the maintenance of normal septation. This is Probable GTP-binding protein EngB from Aeromonas salmonicida (strain A449).